The primary structure comprises 160 residues: uncharacterized protein (160 aa).

The region spanning 20 to 152 (EREIWVLYMK…VYEGLSILSR (133 aa)) is the HTH marR-type domain. The segment at residues 66–89 (VSDIAEKMGASLSNTTGLLDRLEK) is a DNA-binding region (H-T-H motif).

This is an uncharacterized protein from Bacillus subtilis (strain 168).